The sequence spans 486 residues: L-carnitine:corrinoid methyltransferase (486 aa).

The protein belongs to the trimethylamine methyltransferase family. As to quaternary structure, the L-carnitine:THF methyl transfer system is composed of two methyltransferases, MtcB and MtqA, and the corrinoid protein MtqC.

It carries out the reaction Co(I)-[quaternary-amine-specific corrinoid protein] + (R)-carnitine + H(+) = (3R)-4-(dimethylamino)-3-hydroxybutanoate + methyl-Co(III)-[quaternary-amine-specific corrinoid protein]. In terms of biological role, involved in the degradation of the quaternary amine L-carnitine. Component of a corrinoid-dependent methyltransferase system that transfers a methyl group from L-carnitine to tetrahydrofolate (THF), forming methyl-THF, a key intermediate in the Wood-Ljungdahl acetogenesis pathway. MtcB catalyzes the methylation of the corrinoid protein MtqC, using L-carnitine as the methyl donor. L-carnitine demethylation generates the unusual biological product norcarnitine, which is likely degraded by other members of the gut microbiota. In vitro, can methylate free cob(I)alamin. This is L-carnitine:corrinoid methyltransferase from Eubacterium limosum.